The following is a 332-amino-acid chain: MRVSYDELKNEFKRVLLDRQLTEELAEECATAFTDTTQAGAYSHGINRFPRFIQQLEQGDIVPNAIPTKVLSLGSIEQWDAHQAIGNLTAKKMMDRAIELASQHGVGVIALRNANHWMRGGSYGWQAAEKGYIGICWTNALAVMPPWGAKECRIGTNPLIIAVPTTPITMVDMSCSMYSYGMLEVHRLAGRQTFVDAGFDDEGNLTRDPSIVEKNRRLLPMGFWKGSGLSIVLDMIATLLSNGESTVAVTEDKNDEYCVSQVFIAIEVDRLIDGKSKDEKLNRIMDYVKTAERSDPTQAVRLPGHEFTTILSDNQTNGIPVDERVWAKLKTL.

The active-site Proton donor is H44. NAD(+) is bound by residues 168-174 (ITMVDMS), 224-225 (WK), and 304-306 (GHE).

The protein belongs to the LDH2/MDH2 oxidoreductase family. DlgD subfamily. In terms of assembly, homodimer.

Its subcellular location is the cytoplasm. It carries out the reaction 3-dehydro-L-gulonate + NAD(+) = 2,3-dioxo-L-gulonate + NADH + H(+). The catalysed reaction is 3-dehydro-L-gulonate + NADP(+) = 2,3-dioxo-L-gulonate + NADPH + H(+). In terms of biological role, catalyzes the reduction of 2,3-diketo-L-gulonate in the presence of NADH, to form 3-keto-L-gulonate. This is 2,3-diketo-L-gulonate reductase from Haemophilus influenzae (strain ATCC 51907 / DSM 11121 / KW20 / Rd).